Reading from the N-terminus, the 144-residue chain is Small polypeptide DEVIL 15 (144 aa).

A glycan (N-linked (GlcNAc...) asparagine) is linked at asparagine 8. Residues 22–63 (SSSSKPFFTRSFSTKTSSSPSSKSHFTRSFSTKPSSSSSSSD) are disordered. Residues 104–120 (ILSKKGASVTGKCFKVA) form a helical membrane-spanning segment. The segment at 111 to 142 (SVTGKCFKVAKEHKSRFYIIKRCVLMLVCWHK) is required for DVL/RTFL small polypeptide activity.

The protein belongs to the DVL/RTFL small polypeptides family.

It is found in the cell membrane. Small polypeptide acting as a regulatory molecule which coordinates cellular responses required for differentiation, growth and development, probably by restricting polar cell proliferation in lateral organs and coordinating socket cell recruitment and differentiation at trichome sites. The protein is Small polypeptide DEVIL 15 of Arabidopsis thaliana (Mouse-ear cress).